The sequence spans 549 residues: Hydroxylamine reductase (549 aa).

[4Fe-4S] cluster is bound by residues Cys3, Cys6, Cys15, and Cys21. Residues His244, Glu268, Cys313, Cys405, Cys433, Cys458, Glu492, and Lys494 each coordinate hybrid [4Fe-2O-2S] cluster. Cys405 bears the Cysteine persulfide mark.

Belongs to the HCP family. [4Fe-4S] cluster serves as cofactor. The cofactor is hybrid [4Fe-2O-2S] cluster.

It localises to the cytoplasm. It carries out the reaction A + NH4(+) + H2O = hydroxylamine + AH2 + H(+). In terms of biological role, catalyzes the reduction of hydroxylamine to form NH(3) and H(2)O. This Gloeothece citriformis (strain PCC 7424) (Cyanothece sp. (strain PCC 7424)) protein is Hydroxylamine reductase.